A 758-amino-acid chain; its full sequence is Transmembrane E3 ubiquitin-protein ligase 1 (758 aa).

The first 26 residues, 1–26 (MEIDGNTLVFIIVILFLFFSSPGGDG), serve as a signal peptide directing secretion. Over 27–398 (VSSQYEFNQL…YELKIMSIRK (372 aa)) the chain is Lumenal. The helical transmembrane segment at 399 to 419 (HLLFGIALFAAQIYLLLTQMH) threads the bilayer. At 420–431 (HTNTPSMVNKIS) the chain is on the cytoplasmic side. A helical membrane pass occupies residues 432–452 (FYCFSMINLVDGSLATLYFVA). The Lumenal portion of the chain corresponds to 453-458 (ASVVPE). Residues 459 to 479 (LYLPLVISAFSCFILASIFEI) traverse the membrane as a helical segment. At 480-523 (RYLISIYASQVNEQNVGIINLLRGNTGTYDENRPRPAFIPDEGS) the chain is on the cytoplasmic side. Residues 524–544 (IGGSLYGRFFFMLIIFTFLIL) traverse the membrane as a helical segment. Residues 545–553 (SSTSWPRQL) lie on the Lumenal side of the membrane. Residues 554–574 (RMVFEYILIFILNSYWIPQIF) form a helical membrane-spanning segment. The Cytoplasmic segment spans residues 575 to 602 (RNAVKGIPSRRERARSSIGGNRSQNKMP). Residues 603–623 (LLWSFVIGTTIIRSLPVVYVF) traverse the membrane as a helical segment. Residues 624 to 635 (TYSSNVFRHHKD) lie on the Lumenal side of the membrane. Residues 636–656 (VHFVVFLSLWLLFQISILYSQ) traverse the membrane as a helical segment. Over 657–758 (DVLGSRWFLP…PVCRSPLPPL (102 aa)) the chain is Cytoplasmic. The segment at 699–752 (CAICMSDVPIYIEEIPETHKVDQHSYMVTPCNHVFHTSCLENWMNYKLQCPVCR) adopts an RING-type; atypical zinc-finger fold.

Component of the DSC E3 ligase complexes composed of at least TUL1, DSC2, DSC3, UBX3, CDC48 as well as VLD1 for the vacuole-localized complex or GLD1 for the Golgi/endosome-localized complex. Interacts with UBC4.

Its subcellular location is the golgi apparatus membrane. It catalyses the reaction S-ubiquitinyl-[E2 ubiquitin-conjugating enzyme]-L-cysteine + [acceptor protein]-L-lysine = [E2 ubiquitin-conjugating enzyme]-L-cysteine + N(6)-ubiquitinyl-[acceptor protein]-L-lysine.. It participates in protein modification; protein ubiquitination. Catalytic component of the DSC E3 ubiquitin ligase complexes that tag proteins present in Golgi, endosome and vacuole membranes and function in protein homeostasis under non-stress conditions and support a role in protein quality control. Mediates ubiquitination of vacuolar proteins such as CPS1, PPN1, PEP12 and other proteins containing exposed hydrophilic residues within their transmembrane domains, leading to their sorting into internal vesicles in late endosomes. Targets also the unpalmitoylated endosomal SNARE TLG1 to the MVB pathway. In Saccharomyces cerevisiae (strain ATCC 204508 / S288c) (Baker's yeast), this protein is Transmembrane E3 ubiquitin-protein ligase 1 (TUL1).